The following is a 146-amino-acid chain: Transmembrane protein 207 (146 aa).

The first 29 residues, 1 to 29 (MSRSRLFSVTSAISTIGILCLPLFQLVLS), serve as a signal peptide directing secretion. A helical transmembrane segment spans residues 52-72 (IWILLLLVLVAALLCGAVVLC).

In terms of assembly, interacts with WWOX. In terms of tissue distribution, expressed in some signet-ring cell carcinoma, especially those showing high invasion and metastatic activity (at protein level).

The protein resides in the membrane. The polypeptide is Transmembrane protein 207 (TMEM207) (Homo sapiens (Human)).